The sequence spans 141 residues: Transcriptional regulator MraZ (141 aa).

2 SpoVT-AbrB domains span residues 5–47 and 76–119; these read TFNL…KPAD and ANLV…DKVQ.

The protein belongs to the MraZ family. In terms of assembly, forms oligomers.

The protein resides in the cytoplasm. Its subcellular location is the nucleoid. This Mycoplasma genitalium (strain ATCC 33530 / DSM 19775 / NCTC 10195 / G37) (Mycoplasmoides genitalium) protein is Transcriptional regulator MraZ.